A 688-amino-acid chain; its full sequence is SRSF protein kinase 2 (688 aa).

Residues 1–65 (MSVNSEKSSS…EQEDPADYCK (65 aa)) are disordered. A compositionally biased stretch (pro residues) spans 22 to 43 (LVPPPPPPPPPPPPPLPDPTPP). A compositionally biased stretch (acidic residues) spans 44–61 (EPEEEILGSDDEEQEDPA). Ser52 is modified (phosphoserine). The Protein kinase domain occupies 81-684 (YHVIRKLGWG…ASAGECLRHP (604 aa)). Residues 87–95 (LGWGHFSTV) and Lys110 contribute to the ATP site. Catalysis depends on Asp214, which acts as the Proton acceptor. Disordered stretches follow at residues 239-277 (WQKAGAPPPSGSAVSTAPQQKPIGKISKNKKKKLKKKQK), 329-444 (GLEE…GRHK), and 469-501 (SVLSEGSPLTEQEESSPSHDRSRTVSASSTGDL). Over residues 265 to 277 (SKNKKKKLKKKQK) the composition is skewed to basic residues. Position 380 is a phosphoserine (Ser380). The span at 397-421 (QLDDEDDDEEDCPNPEEYNLDEPNA) shows a compositional bias: acidic residues. The segment covering 423–433 (SDYTYSSSYEQ) has biased composition (polar residues). Residue Ser475 is modified to Phosphoserine. Phosphothreonine is present on Thr478. Residues Ser484, Ser486, and Ser490 each carry the phosphoserine modification. At Thr492 the chain carries Phosphothreonine; by PKB/AKT1. Phosphoserine occurs at positions 494 and 497. Ser588 is subject to Phosphoserine; by CK2.

The protein belongs to the protein kinase superfamily. CMGC Ser/Thr protein kinase family. As to quaternary structure, associates with U4/U6-U5 tri-small nuclear ribonucleoproteins (U4/U6-U5 tri-snRNPs). Interacts with PKB/AKT1 in a phosphorylation-dependent manner. The phosphorylated form (by PKB/AKT1) interacts with YWHAB and YWHAE. Interaction with YWHAB suppresses its cleavage by caspases and inhibits the release of its N-terminal pro-apoptotic fragment. Interacts with SFN. Interacts with ACIN1. Interacts with POLR2A/RNA polymerase II; the interaction occurs during the co-transcriptional formation of inappropriate R-loops. Mg(2+) is required as a cofactor. Phosphorylation at Thr-492 by PKB/AKT1 enhances its stimulatory activity in triggering cyclin-D1 (CCND1) expression and promoting apoptosis in neurons, which can be blocked by YWHAB. It also enhances its protein kinase activity toward ACIN1 and SRSF2, promotes its nuclear translocation and prevents its proteolytic cleavage. In terms of processing, proteolytically cleaved at Asp-139 and Asp-403 by caspase-3 during apoptotic cell death. Cleavage at Asp-139 which is the major site of cleavage, produces a small N-terminal fragment that translocates into nucleus and promotes VP16-induced apoptosis. Highly expressed in brain, moderately expressed in heart and skeletal muscle and at low levels in lung, liver, and kidney.

It is found in the cytoplasm. It localises to the nucleus. The protein resides in the nucleoplasm. The protein localises to the nucleus speckle. Its subcellular location is the chromosome. It carries out the reaction L-seryl-[protein] + ATP = O-phospho-L-seryl-[protein] + ADP + H(+). The catalysed reaction is L-threonyl-[protein] + ATP = O-phospho-L-threonyl-[protein] + ADP + H(+). Activated by phosphorylation on Ser-52 and Ser-588. Functionally, serine/arginine-rich protein-specific kinase which specifically phosphorylates its substrates at serine residues located in regions rich in arginine/serine dipeptides, known as RS domains and is involved in the phosphorylation of SR splicing factors and the regulation of splicing. Promotes neuronal apoptosis by up-regulating cyclin-D1 (CCND1) expression. This is done by the phosphorylation of SRSF2, leading to the suppression of p53/TP53 phosphorylation thereby relieving the repressive effect of p53/TP53 on cyclin-D1 (CCND1) expression. Phosphorylates ACIN1, and redistributes it from the nuclear speckles to the nucleoplasm, resulting in cyclin A1 but not cyclin A2 up-regulation. Plays an essential role in spliceosomal B complex formation via the phosphorylation of DDX23/PRP28. Probably by phosphorylating DDX23, leads to the suppression of incorrect R-loops formed during transcription; R-loops are composed of a DNA:RNA hybrid and the associated non-template single-stranded DNA. Can mediate hepatitis B virus (HBV) core protein phosphorylation. Plays a negative role in the regulation of HBV replication through a mechanism not involving the phosphorylation of the core protein but by reducing the packaging efficiency of the pregenomic RNA (pgRNA) without affecting the formation of the viral core particles. The protein is SRSF protein kinase 2 of Homo sapiens (Human).